The chain runs to 208 residues: ATP synthase subunit beta, chloroplastic (208 aa).

The protein belongs to the ATPase alpha/beta chains family. In terms of assembly, F-type ATPases have 2 components, CF(1) - the catalytic core - and CF(0) - the membrane proton channel. CF(1) has five subunits: alpha(3), beta(3), gamma(1), delta(1), epsilon(1). CF(0) has four main subunits: a(1), b(1), b'(1) and c(9-12).

Its subcellular location is the plastid. It is found in the chloroplast thylakoid membrane. The enzyme catalyses ATP + H2O + 4 H(+)(in) = ADP + phosphate + 5 H(+)(out). Its function is as follows. Produces ATP from ADP in the presence of a proton gradient across the membrane. The catalytic sites are hosted primarily by the beta subunits. The sequence is that of ATP synthase subunit beta, chloroplastic (atpB) from Hypolepis hostilis (Fern).